Consider the following 412-residue polypeptide: NAD-dependent dihydropyrimidine dehydrogenase subunit PreT (412 aa).

Glu-286 contacts NAD(+).

The protein belongs to the NADH dehydrogenase family. In terms of assembly, heterotetramer of 2 PreA and 2 PreT subunits.

The enzyme catalyses 5,6-dihydrouracil + NAD(+) = uracil + NADH + H(+). It carries out the reaction 5,6-dihydrothymine + NAD(+) = thymine + NADH + H(+). In terms of biological role, involved in pyrimidine base degradation. Catalyzes physiologically the reduction of uracil to 5,6-dihydrouracil (DHU) by using NADH as a specific cosubstrate. It also catalyzes the reverse reaction and the reduction of thymine to 5,6-dihydrothymine (DHT). This Escherichia coli O157:H7 protein is NAD-dependent dihydropyrimidine dehydrogenase subunit PreT (preT).